The primary structure comprises 782 residues: Pyridoxal-dependent decarboxylase domain-containing protein 1 (782 aa).

Positions 26-48 (ILEDNQRPSEEEKDGKKYTRKDI) are enriched in basic and acidic residues. Disordered stretches follow at residues 26–56 (ILEDNQRPSEEEKDGKKYTRKDIPGPLQGSG), 673–695 (QTTGLTPPPTPTSAHGKRQAGQK), 702–721 (RNSDAMSETSSISHLEEVES), and 726–782 (PMPE…DSLR). 2 stretches are compositionally biased toward polar residues: residues 703-714 (NSDAMSETSSIS) and 747-782 (AEQSSTPSIVPTETSSEGSQEPSIPSANTAESDSLR).

This sequence belongs to the group II decarboxylase family. Pyridoxal 5'-phosphate is required as a cofactor.

In Xenopus laevis (African clawed frog), this protein is Pyridoxal-dependent decarboxylase domain-containing protein 1 (pdxdc1).